Consider the following 193-residue polypeptide: Protein Syd (193 aa).

The protein belongs to the Syd family.

The protein localises to the cell inner membrane. Its function is as follows. Interacts with the SecY protein in vivo. May bind preferentially to an uncomplexed state of SecY, thus functioning either as a chelating agent for excess SecY in the cell or as a regulatory factor that negatively controls the translocase function. This Tolumonas auensis (strain DSM 9187 / NBRC 110442 / TA 4) protein is Protein Syd.